Reading from the N-terminus, the 364-residue chain is Dihydroorotate dehydrogenase (quinone) (364 aa).

Residues 61-65 and Thr-85 contribute to the FMN site; that span reads AGYDK. A substrate-binding site is contributed by Lys-65. 110–114 contacts substrate; sequence NRLGF. The FMN site is built by Asn-139 and Asn-170. Asn-170 serves as a coordination point for substrate. The Nucleophile role is filled by Ser-173. Position 175 (Asn-175) interacts with substrate. FMN is bound by residues Lys-215 and Ser-243. 244–245 provides a ligand contact to substrate; sequence NT. FMN is bound by residues Gly-266, Gly-295, and 316-317; that span reads YT.

The protein belongs to the dihydroorotate dehydrogenase family. Type 2 subfamily. As to quaternary structure, monomer. FMN serves as cofactor.

The protein resides in the cell membrane. It catalyses the reaction (S)-dihydroorotate + a quinone = orotate + a quinol. The protein operates within pyrimidine metabolism; UMP biosynthesis via de novo pathway; orotate from (S)-dihydroorotate (quinone route): step 1/1. Its function is as follows. Catalyzes the conversion of dihydroorotate to orotate with quinone as electron acceptor. In Brucella abortus (strain S19), this protein is Dihydroorotate dehydrogenase (quinone).